A 594-amino-acid chain; its full sequence is Glutamate decarboxylase 1 (594 aa).

Residues 1 to 13 are compositionally biased toward low complexity; sequence MASSTPSSSATSS. The disordered stretch occupies residues 1 to 23; sequence MASSTPSSSATSSNAGADPNTTN. Residue Ser-78 is modified to Phosphoserine. 4-aminobutanoate is bound at residue 190–192; it reads QLS. Lys-405 is subject to N6-(pyridoxal phosphate)lysine. Arg-567 is a binding site for 4-aminobutanoate.

The protein belongs to the group II decarboxylase family. Homodimer. The cofactor is pyridoxal 5'-phosphate.

It carries out the reaction L-glutamate + H(+) = 4-aminobutanoate + CO2. Its function is as follows. Catalyzes the synthesis of the inhibitory neurotransmitter gamma-aminobutyric acid (GABA) with pyridoxal 5'-phosphate as cofactor. The polypeptide is Glutamate decarboxylase 1 (GAD1) (Pongo abelii (Sumatran orangutan)).